A 1357-amino-acid polypeptide reads, in one-letter code: DNA-directed RNA polymerase subunit beta (1357 aa).

The protein belongs to the RNA polymerase beta chain family. The RNAP catalytic core consists of 2 alpha, 1 beta, 1 beta' and 1 omega subunit. When a sigma factor is associated with the core the holoenzyme is formed, which can initiate transcription.

The catalysed reaction is RNA(n) + a ribonucleoside 5'-triphosphate = RNA(n+1) + diphosphate. Functionally, DNA-dependent RNA polymerase catalyzes the transcription of DNA into RNA using the four ribonucleoside triphosphates as substrates. The sequence is that of DNA-directed RNA polymerase subunit beta from Pseudomonas putida (strain ATCC 700007 / DSM 6899 / JCM 31910 / BCRC 17059 / LMG 24140 / F1).